The following is a 429-amino-acid chain: Metacaspase-1A (429 aa).

A disordered region spans residues 1–68 (MQHHHQGSYG…PQHNGGQMYG (68 aa)). The segment covering 8-19 (SYGGGGGGGGYP) has biased composition (gly residues). Over residues 20 to 45 (GQAYREQNPYGYGQQSPQQGYGAPQQ) the composition is skewed to low complexity. The segment covering 46–62 (HNGYNQPPSGYGQPQHN) has biased composition (polar residues). Residues histidine 220 and cysteine 276 contribute to the active site.

It belongs to the peptidase C14B family.

Its function is as follows. Involved in cell death (apoptosis). This is Metacaspase-1A (casA) from Aspergillus clavatus (strain ATCC 1007 / CBS 513.65 / DSM 816 / NCTC 3887 / NRRL 1 / QM 1276 / 107).